A 528-amino-acid chain; its full sequence is Chaperonin GroEL, chloroplastic (528 aa).

Residues 29-32, 86-90, Gly-414, 480-482, and Asp-496 each bind ATP; these read TLGP, DGTTT, and DAA.

Belongs to the chaperonin (HSP60) family. In terms of assembly, forms a cylinder of 14 subunits composed of two heptameric rings stacked back-to-back. Interacts with the co-chaperonin GroES.

It is found in the plastid. It localises to the chloroplast. The catalysed reaction is ATP + H2O + a folded polypeptide = ADP + phosphate + an unfolded polypeptide.. Its function is as follows. Together with its co-chaperonin GroES, plays an essential role in assisting protein folding. The GroEL-GroES system forms a nano-cage that allows encapsulation of the non-native substrate proteins and provides a physical environment optimized to promote and accelerate protein folding. The protein is Chaperonin GroEL, chloroplastic of Pyropia yezoensis (Susabi-nori).